A 673-amino-acid polypeptide reads, in one-letter code: Hemocyanin subunit C (673 aa).

The first 20 residues, 1 to 20 (MGAWKVWTFFAIALVVAVKA), serve as a signal peptide directing secretion. Cu cation-binding residues include histidine 207, histidine 211, and histidine 237. Asparagine 323 carries an N-linked (GlcNAc...) asparagine glycan. Cu cation-binding residues include histidine 358, histidine 362, and histidine 398. Cysteines 568 and 616 form a disulfide.

This sequence belongs to the tyrosinase family. Hemocyanin subfamily. 36-chain polymer consisting of 6 hexamers, each of which includes 4 different chains, A, B, C and D. As to expression, hemolymph.

The protein localises to the secreted. The protein resides in the extracellular space. In terms of biological role, hemocyanins are copper-containing oxygen carriers occurring freely dissolved in the hemolymph of many mollusks and arthropods. The sequence is that of Hemocyanin subunit C (HCC) from Scutigera coleoptrata (House centipede).